We begin with the raw amino-acid sequence, 1416 residues long: Gag-Pro-Pol polyprotein (1416 aa).

G2 is lipidated: N-myristoyl glycine; by host. Residues P100–Y103 carry the PPXY motif motif. 2 consecutive CCHC-type zinc fingers follow at residues G345–T362 and G370–T387. Positions A447 to V525 constitute a Peptidase A2 domain. D452 acts as the Protease; shared with dimeric partner in catalysis. The Reverse transcriptase domain maps to L586 to V776. The Mg(2+) site is built by D652, D727, D728, D1005, E1036, D1057, D1118, D1190, and D1247. An RNase H type-1 domain is found at I996–P1126. The 165-residue stretch at R1179–G1343 folds into the Integrase catalytic domain. The integrase-type DNA-binding region spans K1352–C1400.

This sequence belongs to the retroviral Pol polyprotein family. As to quaternary structure, homodimer; the homodimers are part of the immature particles. Interacts with human TSG101 and NEDD4; these interactions are essential for budding and release of viral particles. In terms of assembly, homodimer; further assembles as homohexamers. Requires Mg(2+) as cofactor. Post-translationally, phosphorylation of the matrix protein p15 by MAPK1 seems to play a role in budding. In terms of processing, myristoylated. Myristoylation of the matrix (MA) domain mediates the transport and binding of Gag polyproteins to the host plasma membrane and is required for the assembly of viral particles. Specific enzymatic cleavages by the viral protease yield mature proteins. The polyprotein is cleaved during and after budding, this process is termed maturation. The protease is autoproteolytically processed at its N- and C-termini.

It localises to the virion. The catalysed reaction is Endonucleolytic cleavage to 5'-phosphomonoester.. It carries out the reaction DNA(n) + a 2'-deoxyribonucleoside 5'-triphosphate = DNA(n+1) + diphosphate. The matrix domain targets Gag, Gag-Pro and Gag-Pro-Pol polyproteins to the plasma membrane via a multipartite membrane binding signal, that includes its myristoylated N-terminus. In terms of biological role, matrix protein. Functionally, forms the spherical core of the virus that encapsulates the genomic RNA-nucleocapsid complex. Its function is as follows. Binds strongly to viral nucleic acids and promote their aggregation. Also destabilizes the nucleic acids duplexes via highly structured zinc-binding motifs. The aspartyl protease mediates proteolytic cleavages of Gag and Gag-Pol polyproteins during or shortly after the release of the virion from the plasma membrane. Cleavages take place as an ordered, step-wise cascade to yield mature proteins. This process is called maturation. Displays maximal activity during the budding process just prior to particle release from the cell. In terms of biological role, RT is a multifunctional enzyme that converts the viral RNA genome into dsDNA in the cytoplasm, shortly after virus entry into the cell. This enzyme displays a DNA polymerase activity that can copy either DNA or RNA templates, and a ribonuclease H (RNase H) activity that cleaves the RNA strand of RNA-DNA heteroduplexes in a partially processive 3' to 5'-endonucleasic mode. Conversion of viral genomic RNA into dsDNA requires many steps. A tRNA-Pro binds to the primer-binding site (PBS) situated at the 5'-end of the viral RNA. RT uses the 3' end of the tRNA primer to perform a short round of RNA-dependent minus-strand DNA synthesis. The reading proceeds through the U5 region and ends after the repeated (R) region which is present at both ends of viral RNA. The portion of the RNA-DNA heteroduplex is digested by the RNase H, resulting in a ssDNA product attached to the tRNA primer. This ssDNA/tRNA hybridizes with the identical R region situated at the 3' end of viral RNA. This template exchange, known as minus-strand DNA strong stop transfer, can be either intra- or intermolecular. RT uses the 3' end of this newly synthesized short ssDNA to perform the RNA-dependent minus-strand DNA synthesis of the whole template. RNase H digests the RNA template except for a polypurine tract (PPT) situated at the 5' end of the genome. It is not clear if both polymerase and RNase H activities are simultaneous. RNase H probably can proceed both in a polymerase-dependent (RNA cut into small fragments by the same RT performing DNA synthesis) and a polymerase-independent mode (cleavage of remaining RNA fragments by free RTs). Secondly, RT performs DNA-directed plus-strand DNA synthesis using the PPT that has not been removed by RNase H as primer. PPT and tRNA primers are then removed by RNase H. The 3' and 5' ssDNA PBS regions hybridize to form a circular dsDNA intermediate. Strand displacement synthesis by RT to the PBS and PPT ends produces a blunt ended, linear dsDNA copy of the viral genome that includes long terminal repeats (LTRs) at both ends. Functionally, catalyzes viral DNA integration into the host chromosome, by performing a series of DNA cutting and joining reactions. The polypeptide is Gag-Pro-Pol polyprotein (pol) (Bos taurus (Bovine)).